A 214-amino-acid chain; its full sequence is Orotate phosphoribosyltransferase (214 aa).

5-phospho-alpha-D-ribose 1-diphosphate contacts are provided by residues Arg125, Lys126, Lys129, His131, and 151–159 (EDTSTTGNS). 2 residues coordinate orotate: Thr155 and Arg183.

This sequence belongs to the purine/pyrimidine phosphoribosyltransferase family. PyrE subfamily. As to quaternary structure, homodimer. Requires Mg(2+) as cofactor.

It carries out the reaction orotidine 5'-phosphate + diphosphate = orotate + 5-phospho-alpha-D-ribose 1-diphosphate. It functions in the pathway pyrimidine metabolism; UMP biosynthesis via de novo pathway; UMP from orotate: step 1/2. Catalyzes the transfer of a ribosyl phosphate group from 5-phosphoribose 1-diphosphate to orotate, leading to the formation of orotidine monophosphate (OMP). The protein is Orotate phosphoribosyltransferase of Tropheryma whipplei (strain Twist) (Whipple's bacillus).